Consider the following 561-residue polypeptide: Urocanate hydratase (561 aa).

Residues 52–53, Q130, 176–178, E196, R201, 242–243, 263–267, 273–274, and Y322 contribute to the NAD(+) site; these read GG, GMG, NA, QTSAH, and YL. Residue C410 is part of the active site. G492 lines the NAD(+) pocket.

Belongs to the urocanase family. Requires NAD(+) as cofactor.

It localises to the cytoplasm. It carries out the reaction 4-imidazolone-5-propanoate = trans-urocanate + H2O. Its pathway is amino-acid degradation; L-histidine degradation into L-glutamate; N-formimidoyl-L-glutamate from L-histidine: step 2/3. Catalyzes the conversion of urocanate to 4-imidazolone-5-propionate. The chain is Urocanate hydratase from Salmonella newport (strain SL254).